The primary structure comprises 2068 residues: Lipoxygenase homology domain-containing protein 1 (2068 aa).

15 consecutive PLAT domains span residues 43-160 (KVYE…RDLL), 172-287 (NKYE…RDIL), 296-412 (ITYI…RQLY), 425-540 (YPWS…REMT), 553-673 (ARYR…RELL), 684-803 (FRYH…VELY), 814-934 (VHYE…RELL), 970-1088 (TTFS…RDLF), 1101-1226 (VPYE…RELV), 1255-1373 (VLYS…RLFY), 1422-1540 (IPYY…RVFD), 1553-1668 (VLYE…CEIC), 1680-1798 (TSYT…RDFA), 1811-1932 (TTYE…VFEV), and 1949-2065 (VKYE…RELF).

As to expression, expressed in the inner ear, specifically in hair cells. Higher expression is detected in the cochlea.

The protein resides in the cell projection. Its subcellular location is the stereocilium. Functionally, required for normal function of hair cells in the inner ear. In Mus musculus (Mouse), this protein is Lipoxygenase homology domain-containing protein 1 (Loxhd1).